The following is a 137-amino-acid chain: Small ribosomal subunit protein uS12 (137 aa).

Residues 1 to 57 form a disordered region; the sequence is MPTINQLVRKPRRAQVTKSKSPAMNVGYNSRKKVQTKLASPQKRGVATRVGTMTPKK. The residue at position 102 (Asp102) is a 3-methylthioaspartic acid.

This sequence belongs to the universal ribosomal protein uS12 family. In terms of assembly, part of the 30S ribosomal subunit. Contacts proteins S8 and S17. May interact with IF1 in the 30S initiation complex.

Functionally, with S4 and S5 plays an important role in translational accuracy. In terms of biological role, interacts with and stabilizes bases of the 16S rRNA that are involved in tRNA selection in the A site and with the mRNA backbone. Located at the interface of the 30S and 50S subunits, it traverses the body of the 30S subunit contacting proteins on the other side and probably holding the rRNA structure together. The combined cluster of proteins S8, S12 and S17 appears to hold together the shoulder and platform of the 30S subunit. This Lactococcus lactis subsp. lactis (strain IL1403) (Streptococcus lactis) protein is Small ribosomal subunit protein uS12.